A 124-amino-acid chain; its full sequence is Ragulator complex protein LAMTOR3 homolog (124 aa).

It belongs to the LAMTOR3 family. In terms of assembly, part of the Ragulator complex composed of Lamtor3, Lamtor2, CG14184, CG14812, and Lamtor4.

Functionally, regulator of the TOR pathway, a signaling cascade that promotes cell growth in response to growth factors, energy levels, and amino acids. As part of the Ragulator complex, may activate the TOR signaling cascade in response to amino acids. This is Ragulator complex protein LAMTOR3 homolog from Drosophila melanogaster (Fruit fly).